The primary structure comprises 704 residues: Urea-proton symporter DUR3 (704 aa).

15 helical membrane passes run 39-59 (YAVI…LVWL), 80-100 (VKTG…ATIL), 115-135 (FWYA…AIEI), 159-179 (IVFL…LLLG), 192-212 (LYAA…AGGL), 216-236 (FLAS…FVFL), 291-311 (SSGG…TVFV), 336-356 (LVWF…ALAL), 388-408 (LTML…AVSS), 435-455 (AVLG…KAGV), 461-481 (YLAM…MLLW), 486-506 (AFGA…TWLT), 527-547 (LAGN…CSLV), 590-610 (AWIV…WPVL), and 622-642 (FWFW…VIIG).

This sequence belongs to the sodium:solute symporter (SSF) (TC 2.A.21) family. As to expression, expressed in root rhizodermis, including root hairs and cortex in more basal root zones. Expressed in shoots.

The protein resides in the cell membrane. In terms of biological role, high-affinity urea-proton symporter involved in the active transport of urea across the plasma membrane into root cells. May play an important role in urea uptake by plant cells at low external urea concentrations. The polypeptide is Urea-proton symporter DUR3 (DUR3) (Arabidopsis thaliana (Mouse-ear cress)).